Consider the following 371-residue polypeptide: Collectin-46 (371 aa).

An N-terminal signal peptide occupies residues 1–20 (MLLLPLSVLLLLTQPWRSLG). The segment at 43 to 215 (PEGGLPGRDG…ERGAKGESGL (173 aa)) is disordered. One can recognise a Collagen-like domain in the interval 46-216 (GLPGRDGQDG…RGAKGESGLA (171 aa)). Residues 51–65 (DGQDGREGPQGEKGD) show a composition bias toward basic and acidic residues. The N-linked (GlcNAc...) asparagine glycan is linked to Asn-90. The segment covering 113-128 (PAGREGPSGKQGSMGP) has biased composition (low complexity). The segment covering 139–148 (GPKGGMGAPG) has biased composition (gly residues). Low complexity predominate over residues 170-191 (APGSAGVAGPAGAIGPQGPSGA). The span at 198 to 210 (KGDRGDPGERGAK) shows a compositional bias: basic and acidic residues. The Cell attachment site signature appears at 201-203 (RGD). Positions 273–371 (QLCREAKGQL…SEPLLVICEF (99 aa)) constitute a C-type lectin domain. 2 disulfides stabilise this stretch: Cys-275–Cys-369 and Cys-347–Cys-361.

This sequence belongs to the SFTPD family. As to quaternary structure, oligomeric complex of 4 set of homotrimers. Hydroxylated. In terms of tissue distribution, highly expressed in thymus and liver.

Its subcellular location is the secreted. The polypeptide is Collectin-46 (CL46) (Bos taurus (Bovine)).